We begin with the raw amino-acid sequence, 98 residues long: NADH-ubiquinone oxidoreductase chain 4L (98 aa).

Transmembrane regions (helical) follow at residues 1–21 (MTLTYMNIMLAFAISLLGMLT), 27–47 (VASLLCLEGMMMSLFIMATLI), and 61–81 (IILLVFAACETAVGLALLISI).

Belongs to the complex I subunit 4L family. In terms of assembly, core subunit of respiratory chain NADH dehydrogenase (Complex I) which is composed of 45 different subunits.

The protein localises to the mitochondrion inner membrane. It catalyses the reaction a ubiquinone + NADH + 5 H(+)(in) = a ubiquinol + NAD(+) + 4 H(+)(out). Its function is as follows. Core subunit of the mitochondrial membrane respiratory chain NADH dehydrogenase (Complex I) which catalyzes electron transfer from NADH through the respiratory chain, using ubiquinone as an electron acceptor. Part of the enzyme membrane arm which is embedded in the lipid bilayer and involved in proton translocation. This Macaca mulatta (Rhesus macaque) protein is NADH-ubiquinone oxidoreductase chain 4L (MT-ND4L).